The following is a 186-amino-acid chain: MSAQIVPAPEHVCYVHCNFCNTIFAVSVPSNSMLNIVTVRCGHCTSLLSVNLRGLVQALPAEDHLQDNLKMHNMSFRENYSEYGSSSRYGRVPMMFSKNDTEHMLHVRPPEKRQRVPSAYNRFIKEEIRRIKANNPDISHREAFSTAAKNWAHFPNIHFGLGSHESSKKLDEAIGAPSPQKVQRLY.

Residues 17–44 form a C4-type zinc finger; it reads CNFCNTIFAVSVPSNSMLNIVTVRCGHC.

Belongs to the YABBY family. In terms of tissue distribution, expressed in leaf blades, leaf sheaths and flowers.

The protein resides in the nucleus. The chain is Protein YABBY 2 (YAB2) from Oryza sativa subsp. japonica (Rice).